Reading from the N-terminus, the 216-residue chain is Purine nucleoside phosphorylase DeoD-type (216 aa).

Phosphate is bound by residues Arg4, Arg23, and 67 to 70; that span reads RVGT. Residues 159 to 161 and 183 to 184 each bind a purine D-ribonucleoside; these read EME and SD. Residue Asp184 is the Proton donor of the active site.

Belongs to the PNP/UDP phosphorylase family. Homohexamer; trimer of homodimers.

The catalysed reaction is a purine D-ribonucleoside + phosphate = a purine nucleobase + alpha-D-ribose 1-phosphate. The enzyme catalyses a purine 2'-deoxy-D-ribonucleoside + phosphate = a purine nucleobase + 2-deoxy-alpha-D-ribose 1-phosphate. Catalyzes the reversible phosphorolytic breakdown of the N-glycosidic bond in the beta-(deoxy)ribonucleoside molecules, with the formation of the corresponding free purine bases and pentose-1-phosphate. The polypeptide is Purine nucleoside phosphorylase DeoD-type (Streptococcus thermophilus).